The sequence spans 434 residues: Enolase (434 aa).

Q165 is a (2R)-2-phosphoglycerate binding site. E207 acts as the Proton donor in catalysis. Mg(2+) is bound by residues D244, E291, and D318. The (2R)-2-phosphoglycerate site is built by K343, R372, S373, and K394. K343 (proton acceptor) is an active-site residue.

Belongs to the enolase family. The cofactor is Mg(2+).

It localises to the cytoplasm. It is found in the secreted. Its subcellular location is the cell surface. The catalysed reaction is (2R)-2-phosphoglycerate = phosphoenolpyruvate + H2O. Its pathway is carbohydrate degradation; glycolysis; pyruvate from D-glyceraldehyde 3-phosphate: step 4/5. In terms of biological role, catalyzes the reversible conversion of 2-phosphoglycerate (2-PG) into phosphoenolpyruvate (PEP). It is essential for the degradation of carbohydrates via glycolysis. This chain is Enolase, found in Staphylococcus saprophyticus subsp. saprophyticus (strain ATCC 15305 / DSM 20229 / NCIMB 8711 / NCTC 7292 / S-41).